Consider the following 257-residue polypeptide: Ribosomal RNA small subunit methyltransferase J (257 aa).

S-adenosyl-L-methionine is bound by residues 109–110, 125–126, and aspartate 179; these read RD and ER.

It belongs to the methyltransferase superfamily. RsmJ family.

The protein resides in the cytoplasm. The enzyme catalyses guanosine(1516) in 16S rRNA + S-adenosyl-L-methionine = N(2)-methylguanosine(1516) in 16S rRNA + S-adenosyl-L-homocysteine + H(+). Its function is as follows. Specifically methylates the guanosine in position 1516 of 16S rRNA. This is Ribosomal RNA small subunit methyltransferase J from Actinobacillus succinogenes (strain ATCC 55618 / DSM 22257 / CCUG 43843 / 130Z).